We begin with the raw amino-acid sequence, 149 residues long: 3-hydroxyacyl-[acyl-carrier-protein] dehydratase FabZ (149 aa).

His-49 is a catalytic residue.

This sequence belongs to the thioester dehydratase family. FabZ subfamily.

The protein localises to the cytoplasm. It carries out the reaction a (3R)-hydroxyacyl-[ACP] = a (2E)-enoyl-[ACP] + H2O. In terms of biological role, involved in unsaturated fatty acids biosynthesis. Catalyzes the dehydration of short chain beta-hydroxyacyl-ACPs and long chain saturated and unsaturated beta-hydroxyacyl-ACPs. This chain is 3-hydroxyacyl-[acyl-carrier-protein] dehydratase FabZ, found in Sulfurimonas denitrificans (strain ATCC 33889 / DSM 1251) (Thiomicrospira denitrificans (strain ATCC 33889 / DSM 1251)).